Reading from the N-terminus, the 408-residue chain is Multidrug resistance protein MdtG (408 aa).

Helical transmembrane passes span 16–36 (LIVA…VMPF), 58–78 (IVFS…GGLA), 92–112 (LGMG…QFLI), 115–135 (ALLG…ATQV), 146–166 (TLST…GLLA), 173–193 (PVFF…LLCI), 224–244 (LFVT…ILTL), 253–273 (VGNI…AALL), 290–310 (ILIA…FVQT), 319–339 (FLLG…LVYN), and 378–398 (AVFL…WNSL).

It belongs to the major facilitator superfamily. DHA1 family. MdtG (TC 2.A.1.2.20) subfamily.

Its subcellular location is the cell inner membrane. Confers resistance to fosfomycin and deoxycholate. The sequence is that of Multidrug resistance protein MdtG from Escherichia fergusonii (strain ATCC 35469 / DSM 13698 / CCUG 18766 / IAM 14443 / JCM 21226 / LMG 7866 / NBRC 102419 / NCTC 12128 / CDC 0568-73).